A 129-amino-acid polypeptide reads, in one-letter code: M-zodatoxin-Lt8f (129 aa).

Residues 1–20 (MKYFVVALALVAAFACIAES) form the signal peptide. A propeptide spanning residues 21–60 (KPAESEHELAEVEEENELADLEDAVWLEHLADLSDLEEAR) is cleaved from the precursor. A Processing quadruplet motif motif is present at residues 57 to 60 (EEAR).

Post-translationally, cleavage of the propeptide depends on the processing quadruplet motif (XXXR, with at least one of X being E). As to expression, expressed by the venom gland.

It is found in the secreted. Its function is as follows. Insecticidal, cytolytic and antimicrobial peptide. Has insecticidal activity against the flesh fly S.carnaria. Has antibacterial activity against the Gram-negative bacteria E.coli. Forms voltage-dependent, ion-permeable channels in membranes. At high concentration causes cell membrane lysis. In Lachesana tarabaevi (Spider), this protein is M-zodatoxin-Lt8f (cit 1-7).